A 382-amino-acid polypeptide reads, in one-letter code: Serine protease 23 (382 aa).

A signal peptide spans 1 to 22 (MAGIPGLFILLVLLCVFMQVSP). Residue N92 is glycosylated (N-linked (GlcNAc...) asparagine). Residues C159 and C175 are joined by a disulfide bond. Catalysis depends on H174, which acts as the Charge relay system. N-linked (GlcNAc...) asparagine glycosylation is present at N206. Active-site charge relay system residues include D239 and S315.

Belongs to the peptidase S1 family.

It is found in the secreted. In Mus musculus (Mouse), this protein is Serine protease 23 (Prss23).